A 650-amino-acid polypeptide reads, in one-letter code: Chaperone protein DnaK (650 aa).

A Phosphothreonine; by autocatalysis modification is found at Thr-200. A compositionally biased stretch (low complexity) spans 611 to 636; sequence AQQAGAAGAAGAAAEGASAQGGAQPA. The disordered stretch occupies residues 611-650; that stretch reads AQQAGAAGAAGAAAEGASAQGGAQPADDVVDADFKEVKKD.

Belongs to the heat shock protein 70 family.

In terms of biological role, acts as a chaperone. This is Chaperone protein DnaK from Burkholderia mallei (strain NCTC 10247).